We begin with the raw amino-acid sequence, 147 residues long: Phospholipase A2 SSD387 (147 aa).

Positions 1–19 (MSPKFLLFSIIAVWSCAAA) are cleaved as a signal peptide. A propeptide spanning residues 20–28 (IEALFIQPR) is cleaved from the precursor. Cystine bridges form between Cys-55–Cys-71, Cys-70–Cys-130, Cys-77–Cys-123, Cys-86–Cys-116, and Cys-109–Cys-121. Residues Gly-56 and Gly-58 each contribute to the Ca(2+) site. His-74 is a catalytic residue. Asp-75 provides a ligand contact to Ca(2+). Asp-124 is a catalytic residue.

The cofactor is Ca(2+). Expressed by the venom gland.

The protein resides in the secreted. The enzyme catalyses a 1,2-diacyl-sn-glycero-3-phosphocholine + H2O = a 1-acyl-sn-glycero-3-phosphocholine + a fatty acid + H(+). Its function is as follows. PLA2 catalyzes the calcium-dependent hydrolysis of the 2-acyl groups in 3-sn-phosphoglycerides. The protein is Phospholipase A2 SSD387 of Scolopendra dehaani (Thai centipede).